The primary structure comprises 582 residues: Adenine deaminase (582 aa).

The protein belongs to the metallo-dependent hydrolases superfamily. Adenine deaminase family. The cofactor is Mn(2+).

It carries out the reaction adenine + H2O + H(+) = hypoxanthine + NH4(+). The protein is Adenine deaminase of Oceanobacillus iheyensis (strain DSM 14371 / CIP 107618 / JCM 11309 / KCTC 3954 / HTE831).